The primary structure comprises 232 residues: F420-dependent NADP reductase (232 aa).

NADP(+)-binding positions include 15 to 18 (TGDQ), 37 to 38 (SR), K42, V80, V106, and A151.

The protein belongs to the F420-dependent NADP reductase family. Homotetramer.

It catalyses the reaction reduced coenzyme F420-(gamma-L-Glu)(n) + NADP(+) = oxidized coenzyme F420-(gamma-L-Glu)(n) + NADPH + 2 H(+). Catalyzes the reduction of NADP(+) with F420H(2) via hydride transfer, and likely the reverse reaction, i.e. the reduction of F420 with NADPH. Probably functions in the regeneration of NADPH required in biosynthetic reactions. Is specific for reduced F420 as electron donor for the reduction of NADP; neither reduced FAD nor FMN can act as electron donor. The enzyme is also specific for NADP; NAD is not utilized as substrate. The chain is F420-dependent NADP reductase (fno) from Methanothermobacter thermautotrophicus (strain ATCC 29096 / DSM 1053 / JCM 10044 / NBRC 100330 / Delta H) (Methanobacterium thermoautotrophicum).